Consider the following 238-residue polypeptide: RNA pyrophosphohydrolase (238 aa).

Residues 6–149 (GFRPNVGIIL…KREVYQMALS (144 aa)) enclose the Nudix hydrolase domain. Positions 38 to 59 (GGIKYGETPEQAMYRELHEEVG) match the Nudix box motif. The disordered stretch occupies residues 161-238 (APLSPYGRGG…PDDTPSKDSL (78 aa)). The segment covering 171-181 (PHRERDGRDNR) has biased composition (basic and acidic residues). The span at 188 to 199 (RNDQNTRGQRQP) shows a compositional bias: polar residues. Residues 204-217 (VTTSTVIVETVITS) show a composition bias toward low complexity.

Belongs to the Nudix hydrolase family. RppH subfamily. A divalent metal cation is required as a cofactor.

Accelerates the degradation of transcripts by removing pyrophosphate from the 5'-end of triphosphorylated RNA, leading to a more labile monophosphorylated state that can stimulate subsequent ribonuclease cleavage. The polypeptide is RNA pyrophosphohydrolase (Ralstonia nicotianae (strain ATCC BAA-1114 / GMI1000) (Ralstonia solanacearum)).